The chain runs to 472 residues: 7-dimethylallyltryptophan synthase hasE (472 aa).

Glutamate 138 provides a ligand contact to L-tryptophan. The dimethylallyl diphosphate site is built by arginine 154, lysine 239, tyrosine 241, lysine 313, tyrosine 315, tyrosine 393, tyrosine 460, and tyrosine 464.

It belongs to the tryptophan dimethylallyltransferase family. Homodimer.

It carries out the reaction L-tryptophan + dimethylallyl diphosphate = 7-(3-methylbut-2-enyl)-L-tryptophan + diphosphate. It catalyses the reaction an N-terminal L-tryptophanyl-L-alpha-aminoacyl-[peptide] + H2O = an N-terminal L-alpha-aminoacyl-[peptide] + L-tryptophan. Its pathway is secondary metabolite biosynthesis. Its function is as follows. 7-dimethylallyltryptophan synthase; part of the gene cluster that mediates the biosynthesis of hexadehydro-astechrome (HAS), a tryptophan-derived iron(III)-complex that acts as a virulence factor in infected mice. Catalyzes the prenylation of L-tryptophan at the C-7 position of the indole moiety. The enzyme is specific for dimethylallyl diphosphate (DMAPP) as prenyl donor. Also accepts D-tryptophan, typtophan-derivatives with modifications at the side chain or the indole ring, and linear and cyclic dipeptides such as H-L-Trp-L-Gly-OH or cyclo-L-Trp-L-Gly as substrates, however with lower efficiency. Also has tryptophan aminopeptidase activity towards linear peptides with a tryptophanyl moiety at the N-terminus. Dipeptides are better substrates than peptides with 3 or more amino acids. Enzymatic rate constants however are much higher for the prenyltransferase activity than for the aminopeptidase activity. Within the hexadehydro-astechrome biosyntetic pathway, hasE catalyzes the prenylation of the hasD-tethered tryptophan or the resulting tethered Trp-Ala dipeptid. The HAS biosynthesis begins with the synthesis of a tethered Trp-Ala dipeptide by the NRPS hasD. The 7-dimethylallyltryptophan synthase hasE then catalyzes the prenylation of the hasD-tethered tryptophan or the resulting tethered Trp-Ala dipeptide at the C-7 position of the indole moiety. HAS biosynthesis continues via tethered intermediates with the succesive actions of the cytochrome P450 monooxygenase hasH, the O-methyltransferase hasC, and the FAD-linked oxidoreductase hasG. The resulting O-methylated diketopiperazine is then released from hasD. Finally, three O-methylated diketopiperazine molecules assemble in a trimeric complex with Fe(III) to produce hexadehydro-astechrome. This is 7-dimethylallyltryptophan synthase hasE from Aspergillus fumigatus (strain CBS 144.89 / FGSC A1163 / CEA10) (Neosartorya fumigata).